The primary structure comprises 274 residues: Protein CIMAP1C (274 aa).

The segment at 1 to 27 is disordered; it reads MKLPKGTRSSVYFAQHPEKEPLPSRQE. The span at 16–27 shows a compositional bias: basic and acidic residues; it reads HPEKEPLPSRQE. 2 STPGR repeats span residues 199–224 and 235–260; these read PGPT…MAKR and PGPG…MGIK.

Belongs to the CIMAP family.

The protein is Protein CIMAP1C of Homo sapiens (Human).